We begin with the raw amino-acid sequence, 226 residues long: Leucyl/phenylalanyl-tRNA--protein transferase (226 aa).

It belongs to the L/F-transferase family.

The protein resides in the cytoplasm. It carries out the reaction N-terminal L-lysyl-[protein] + L-leucyl-tRNA(Leu) = N-terminal L-leucyl-L-lysyl-[protein] + tRNA(Leu) + H(+). It catalyses the reaction N-terminal L-arginyl-[protein] + L-leucyl-tRNA(Leu) = N-terminal L-leucyl-L-arginyl-[protein] + tRNA(Leu) + H(+). The catalysed reaction is L-phenylalanyl-tRNA(Phe) + an N-terminal L-alpha-aminoacyl-[protein] = an N-terminal L-phenylalanyl-L-alpha-aminoacyl-[protein] + tRNA(Phe). Functionally, functions in the N-end rule pathway of protein degradation where it conjugates Leu, Phe and, less efficiently, Met from aminoacyl-tRNAs to the N-termini of proteins containing an N-terminal arginine or lysine. This is Leucyl/phenylalanyl-tRNA--protein transferase from Stutzerimonas stutzeri (strain A1501) (Pseudomonas stutzeri).